The following is a 1152-amino-acid chain: Syntaxin-binding protein 5 (1152 aa).

A disordered region spans residues 14 to 35 (TAGSSSASQQQQQQQHPPGNRE). Residues 17–28 (SSSASQQQQQQQ) show a composition bias toward low complexity. WD repeat units follow at residues 62–95 (SALA…CYCQ), 102–141 (VIQL…SLKF), 146–182 (VTFC…GYVI), 201–235 (HISD…DYRY), 241–273 (IHSV…PTKP), 295–337 (PILK…KSTA), 345–379 (IVDF…LIDL), 401–478 (TCCE…YKLK), 506–620 (QIIS…ELVI), and 634–696 (TSLA…SGAG). Disordered stretches follow at residues 557 to 596 (TPEG…GLRD) and 675 to 731 (SNDP…QKVN). Serine 693 carries the phosphoserine modification. Over residues 713 to 722 (SPTSGSSSPH) the composition is skewed to low complexity. Serine 724 bears the Phosphoserine; by PKA mark. At serine 760 the chain carries Phosphoserine. Threonine 763 carries the post-translational modification Phosphothreonine. Serine 783 bears the Phosphoserine mark. Threonine 785 bears the Phosphothreonine mark. Serine 786 is modified (phosphoserine). WD repeat units lie at residues 795–852 (ISAL…SGTI), 861–935 (RMAF…QNCA), 940–984 (ITET…LDVY), and 998–1021 (CFAN…TYSQ). Residues 879–893 (WTEHNVPEEKDEKEK) are compositionally biased toward basic and acidic residues. Residues 879-907 (WTEHNVPEEKDEKEKLKKRRPVSVSPSSS) are disordered. Serine 901 and serine 903 each carry phosphoserine. Phosphothreonine is present on threonine 1040. A phosphoserine mark is found at serine 1059 and serine 1132. The 61-residue stretch at 1087–1147 (GIEGVKGAAS…HEMMLKYKDK (61 aa)) folds into the v-SNARE coiled-coil homology domain.

Belongs to the WD repeat L(2)GL family. As to quaternary structure, part of a complex that contains STXBP5, STX4A and SNAP23. Interacts with STX1A and STX4A via its v-SNARE homology domain. Part of a complex that contains STX1, STXBP5, SNAP25 and SYT1. Post-translationally, phosphorylation by PKA reduces interaction with STX1A and enhances synaptic neurotransmitter release. Isoform 1 is detected in heart, brain, lung, liver, skeletal muscle, kidney and testis. Isoform 2 is detected in brain and in testis. Isoform 3 is detected in testis.

It is found in the cytoplasm. Its subcellular location is the cell membrane. The protein localises to the cytoplasmic vesicle membrane. It localises to the synapse. The protein resides in the cytoplasmic vesicle. It is found in the secretory vesicle. Its subcellular location is the synaptic vesicle. Inhibits translocation of GLUT4 from intracellular vesicles to the plasma membrane. Plays a regulatory role in calcium-dependent exocytosis and neurotransmitter release. Inhibits membrane fusion between transport vesicles and the plasma membrane. May modulate the assembly of trans-SNARE complexes between transport vesicles and the plasma membrane. Competes with STXBP1 for STX1 binding. The protein is Syntaxin-binding protein 5 (Stxbp5) of Rattus norvegicus (Rat).